A 546-amino-acid polypeptide reads, in one-letter code: MAKDIKFDIQARNGIKRGVDALANAVKVTLGPKGRNVIISKSFGAPTVTKDGVTVAKEIELEDPLENMGAQMVKEVASKTNDLAGDGTTTATVLAQAIVQEGLKNVAAGANPMDLKRGIDKAVEALTADLAKQTKEVGDSSEKIKQVASISANNDDMIGDLIAQAFGKVGKEGVITVEEAKGTETHVDVVEGMQFDRGYLSPYFVTNSEKMTADLEDPYILLFDKKISSMKDLLPVLEPVAQSGKPLLIIAEDVDGEALATLVVNKLRGSLKIAAVKAPGFGDRRKAMLEDIAILTGGTVISEERGFSLENATIDMLGTAEKVAIDKDNTTVVNGAGDDKAIKERVNQIKAQIESTTSDYDREKLQERLAKLAGGVAVLYVGAASEVEMKEKKDRVDDALHATRAAVEEGIVAGGGVALIRAQVVLSKIKTENPDEATGVKIVSKAIESPLRTIVENAGGEGSVVINKVLEGKKDFGYDAKTETYVDMLKAGIIDPKKVTRVALENAASVAGMILTTECALTDIPEDNAGGGGMPQGMGGGMPGMM.

Residues 29-32 (TLGP), lysine 50, 86-90 (DGTTT), glycine 415, and aspartate 495 each bind ATP. A disordered region spans residues 526–546 (EDNAGGGGMPQGMGGGMPGMM). Positions 529-546 (AGGGGMPQGMGGGMPGMM) are enriched in gly residues.

Belongs to the chaperonin (HSP60) family. Forms a cylinder of 14 subunits composed of two heptameric rings stacked back-to-back. Interacts with the co-chaperonin GroES.

The protein localises to the cytoplasm. It carries out the reaction ATP + H2O + a folded polypeptide = ADP + phosphate + an unfolded polypeptide.. Its function is as follows. Together with its co-chaperonin GroES, plays an essential role in assisting protein folding. The GroEL-GroES system forms a nano-cage that allows encapsulation of the non-native substrate proteins and provides a physical environment optimized to promote and accelerate protein folding. This is Chaperonin GroEL from Christiangramia forsetii (strain DSM 17595 / CGMCC 1.15422 / KT0803) (Gramella forsetii).